The chain runs to 247 residues: tRNA pseudouridine synthase A (247 aa).

Aspartate 53 acts as the Nucleophile in catalysis. Residue tyrosine 111 participates in substrate binding.

The protein belongs to the tRNA pseudouridine synthase TruA family. As to quaternary structure, homodimer.

The catalysed reaction is uridine(38/39/40) in tRNA = pseudouridine(38/39/40) in tRNA. Formation of pseudouridine at positions 38, 39 and 40 in the anticodon stem and loop of transfer RNAs. The protein is tRNA pseudouridine synthase A of Bacillus subtilis (strain 168).